A 1625-amino-acid chain; its full sequence is E3 ubiquitin-protein ligase KEG (1625 aa).

The RING-type zinc finger occupies 10-56 (CSVCHTRYNEDERVPLLLQCGHGFCKDCLSKMFSTSSDTTLTCPRCR). Positions 91–106 (YTDDEDDDDEEDGSDE) are enriched in acidic residues. A disordered region spans residues 91-110 (YTDDEDDDDEEDGSDEDGAR). The 287-residue stretch at 141 to 427 (RQIGEESSSG…TFNAMLATFL (287 aa)) folds into the Protein kinase domain. Residues 147-155 (SSSGGFGGV) and lysine 176 each bind ATP. ANK repeat units follow at residues 467–496 (DNPN…AGGG), 510–540 (DGQS…NVDI), 544–573 (DGDP…NVRS), 579–608 (SGPS…DPNA), 612–641 (EGET…SRSM), 647–676 (KCLT…PEEI), 685–720 (PVGT…DPTA), 725–754 (HGRT…NANI), 758–787 (HNTI…DCNI), 791–826 (EGDN…AVDV), and 832–863 (KTVR…HLSP).

Interacts with ABI5 and EDR1. Autophosphotylated and autoubiquitinated in vitro. In terms of processing, phosphorylation enhances self-ubiquitination. Post-translationally, autoubiquitinated in response to abscisic acid (ABA) and subsequently targeted to proteolysis. In terms of tissue distribution, expressed in all tissues of young seedlings. In flowering plants, only detected in the youngest part of the stem, anthers and the receptacle of immature siliques. Not found in mature leave, older parts of the stem, flower parts other than anthers or mature siliques.

The protein localises to the golgi apparatus. The protein resides in the trans-Golgi network. It is found in the early endosome. It carries out the reaction L-seryl-[protein] + ATP = O-phospho-L-seryl-[protein] + ADP + H(+). It catalyses the reaction L-threonyl-[protein] + ATP = O-phospho-L-threonyl-[protein] + ADP + H(+). The catalysed reaction is S-ubiquitinyl-[E2 ubiquitin-conjugating enzyme]-L-cysteine + [acceptor protein]-L-lysine = [E2 ubiquitin-conjugating enzyme]-L-cysteine + N(6)-ubiquitinyl-[acceptor protein]-L-lysine.. It functions in the pathway protein modification; protein ubiquitination. Functionally, mediates E2-dependent protein ubiquitination. Acts as a negative regulator of abscisic acid signaling. Required for ABI5 degradation, by mediating its ubiquitination. Together with EDR1, may regulate endocytic trafficking and/or the formation of signaling complexes on trans-Golgi network (TGN)/ early endosome (EE) vesicles during stress responses. This chain is E3 ubiquitin-protein ligase KEG (KEG), found in Arabidopsis thaliana (Mouse-ear cress).